The chain runs to 393 residues: Digeranylgeranylglycerophospholipid reductase (393 aa).

FAD-binding residues include Ala-14, Asp-33, Cys-44, Ala-45, Gly-47, Arg-100, Ala-124, Asp-280, Gly-292, and Ile-293.

This sequence belongs to the geranylgeranyl reductase family. DGGGPL reductase subfamily. FAD is required as a cofactor.

The enzyme catalyses a 2,3-bis-O-phytanyl-sn-glycerol 1-phospholipid + 8 A = a 2,3-bis-O-(geranylgeranyl)-sn-glycerol 1-phospholipid + 8 AH2. It catalyses the reaction 2,3-bis-O-(phytanyl)-sn-glycerol 1-phosphate + 8 A = 2,3-bis-O-(geranylgeranyl)-sn-glycerol 1-phosphate + 8 AH2. The catalysed reaction is CDP-2,3-bis-O-(geranylgeranyl)-sn-glycerol + 8 AH2 = CDP-2,3-bis-O-(phytanyl)-sn-glycerol + 8 A. It carries out the reaction archaetidylserine + 8 AH2 = 2,3-bis-O-phytanyl-sn-glycero-3-phospho-L-serine + 8 A. It functions in the pathway membrane lipid metabolism; glycerophospholipid metabolism. Its function is as follows. Is involved in the reduction of 2,3-digeranylgeranylglycerophospholipids (unsaturated archaeols) into 2,3-diphytanylglycerophospholipids (saturated archaeols) in the biosynthesis of archaeal membrane lipids. Catalyzes the formation of archaetidic acid (2,3-di-O-phytanyl-sn-glyceryl phosphate) from 2,3-di-O-geranylgeranylglyceryl phosphate (DGGGP) via the hydrogenation of each double bond of the isoprenoid chains. Is also probably able to reduce double bonds of geranyl groups in CDP-2,3-bis-O-(geranylgeranyl)-sn-glycerol and archaetidylserine, thus acting at various stages in the biosynthesis of archaeal membrane lipids. In Methanobrevibacter smithii (strain ATCC 35061 / DSM 861 / OCM 144 / PS), this protein is Digeranylgeranylglycerophospholipid reductase.